The chain runs to 127 residues: Succinate dehydrogenase cytochrome b560 subunit (127 aa).

The next 2 helical transmembrane spans lie at 36-53 and 60-83; these read VGLA…RIIL and NLLT…FILL. His88 contributes to the heme binding site. Residues 109–126 form a helical membrane-spanning segment; that stretch reads LSKFSLFLLVSLSLILIF.

This sequence belongs to the cytochrome b560 family. In terms of assembly, forms part of complex II containing four subunits: a 70 kDa flavoprotein (FP), a 27 kDa iron-sulfur protein (IP), a cytochrome B and a membrane-anchoring protein. The cofactor is heme.

The protein resides in the mitochondrion inner membrane. Its pathway is carbohydrate metabolism; tricarboxylic acid cycle. Its function is as follows. Membrane-anchoring subunit of succinate dehydrogenase (SDH) that is involved in complex II of the mitochondrial electron transport chain and is responsible for transferring electrons from succinate to ubiquinone (coenzyme Q). In Chondrus crispus (Carrageen Irish moss), this protein is Succinate dehydrogenase cytochrome b560 subunit (SDH3).